Consider the following 115-residue polypeptide: NADH-ubiquinone oxidoreductase chain 3 (115 aa).

Helical transmembrane passes span 4–24 (LLVI…AFWL), 55–75 (FFLV…LLPI), and 84–104 (INMV…GLAY).

Belongs to the complex I subunit 3 family. In terms of assembly, core subunit of respiratory chain NADH dehydrogenase (Complex I) which is composed of 45 different subunits. Interacts with TMEM186. Interacts with TMEM242.

It localises to the mitochondrion inner membrane. It carries out the reaction a ubiquinone + NADH + 5 H(+)(in) = a ubiquinol + NAD(+) + 4 H(+)(out). In terms of biological role, core subunit of the mitochondrial membrane respiratory chain NADH dehydrogenase (Complex I) which catalyzes electron transfer from NADH through the respiratory chain, using ubiquinone as an electron acceptor. Essential for the catalytic activity of complex I. In Ochrotomys nuttalli (Golden mouse), this protein is NADH-ubiquinone oxidoreductase chain 3.